A 181-amino-acid polypeptide reads, in one-letter code: ATP synthase subunit delta (181 aa).

This sequence belongs to the ATPase delta chain family. As to quaternary structure, F-type ATPases have 2 components, F(1) - the catalytic core - and F(0) - the membrane proton channel. F(1) has five subunits: alpha(3), beta(3), gamma(1), delta(1), epsilon(1). F(0) has three main subunits: a(1), b(2) and c(10-14). The alpha and beta chains form an alternating ring which encloses part of the gamma chain. F(1) is attached to F(0) by a central stalk formed by the gamma and epsilon chains, while a peripheral stalk is formed by the delta and b chains.

The protein resides in the cell inner membrane. Its function is as follows. F(1)F(0) ATP synthase produces ATP from ADP in the presence of a proton or sodium gradient. F-type ATPases consist of two structural domains, F(1) containing the extramembraneous catalytic core and F(0) containing the membrane proton channel, linked together by a central stalk and a peripheral stalk. During catalysis, ATP synthesis in the catalytic domain of F(1) is coupled via a rotary mechanism of the central stalk subunits to proton translocation. In terms of biological role, this protein is part of the stalk that links CF(0) to CF(1). It either transmits conformational changes from CF(0) to CF(1) or is implicated in proton conduction. The polypeptide is ATP synthase subunit delta (Chlorobaculum parvum (strain DSM 263 / NCIMB 8327) (Chlorobium vibrioforme subsp. thiosulfatophilum)).